The following is a 293-amino-acid chain: 4-hydroxy-tetrahydrodipicolinate synthase (293 aa).

Residue T45 participates in pyruvate binding. Y133 (proton donor/acceptor) is an active-site residue. K161 acts as the Schiff-base intermediate with substrate in catalysis. I203 serves as a coordination point for pyruvate.

Belongs to the DapA family. As to quaternary structure, homotetramer; dimer of dimers.

The protein localises to the cytoplasm. It carries out the reaction L-aspartate 4-semialdehyde + pyruvate = (2S,4S)-4-hydroxy-2,3,4,5-tetrahydrodipicolinate + H2O + H(+). The protein operates within amino-acid biosynthesis; L-lysine biosynthesis via DAP pathway; (S)-tetrahydrodipicolinate from L-aspartate: step 3/4. In terms of biological role, catalyzes the condensation of (S)-aspartate-beta-semialdehyde [(S)-ASA] and pyruvate to 4-hydroxy-tetrahydrodipicolinate (HTPA). The sequence is that of 4-hydroxy-tetrahydrodipicolinate synthase from Shewanella piezotolerans (strain WP3 / JCM 13877).